The primary structure comprises 463 residues: Ribosomal protein uS12 methylthiotransferase RimO (463 aa).

An MTTase N-terminal domain is found at 15 to 130 (PKVGFVSLGC…VMQAVHSHLP (116 aa)). Positions 24, 60, 89, 161, 165, and 168 each coordinate [4Fe-4S] cluster. Residues 147-392 (LTPRHYAYLK…MEVAEQVSAK (246 aa)) enclose the Radical SAM core domain. Residues 395 to 463 (ARKVGKTLKV…ADGHDLWGEV (69 aa)) form the TRAM domain.

It belongs to the methylthiotransferase family. RimO subfamily. [4Fe-4S] cluster serves as cofactor.

It is found in the cytoplasm. It catalyses the reaction L-aspartate(89)-[ribosomal protein uS12]-hydrogen + (sulfur carrier)-SH + AH2 + 2 S-adenosyl-L-methionine = 3-methylsulfanyl-L-aspartate(89)-[ribosomal protein uS12]-hydrogen + (sulfur carrier)-H + 5'-deoxyadenosine + L-methionine + A + S-adenosyl-L-homocysteine + 2 H(+). Functionally, catalyzes the methylthiolation of an aspartic acid residue of ribosomal protein uS12. The protein is Ribosomal protein uS12 methylthiotransferase RimO of Paraburkholderia phymatum (strain DSM 17167 / CIP 108236 / LMG 21445 / STM815) (Burkholderia phymatum).